The sequence spans 482 residues: Methylenetetrahydrofolate--tRNA-(uracil-5-)-methyltransferase TrmFO (482 aa).

11–16 (GGGLAG) provides a ligand contact to FAD. The segment at 450 to 482 (LRQPSPWSAEDSPRAALPIPEPTPLGPASGSSE) is disordered.

This sequence belongs to the MnmG family. TrmFO subfamily. It depends on FAD as a cofactor.

It is found in the cytoplasm. The enzyme catalyses uridine(54) in tRNA + (6R)-5,10-methylene-5,6,7,8-tetrahydrofolate + NADH + H(+) = 5-methyluridine(54) in tRNA + (6S)-5,6,7,8-tetrahydrofolate + NAD(+). It carries out the reaction uridine(54) in tRNA + (6R)-5,10-methylene-5,6,7,8-tetrahydrofolate + NADPH + H(+) = 5-methyluridine(54) in tRNA + (6S)-5,6,7,8-tetrahydrofolate + NADP(+). In terms of biological role, catalyzes the folate-dependent formation of 5-methyl-uridine at position 54 (M-5-U54) in all tRNAs. This chain is Methylenetetrahydrofolate--tRNA-(uracil-5-)-methyltransferase TrmFO, found in Rhodospirillum rubrum (strain ATCC 11170 / ATH 1.1.1 / DSM 467 / LMG 4362 / NCIMB 8255 / S1).